We begin with the raw amino-acid sequence, 640 residues long: 1,4-alpha-glucan branching enzyme GlgB (640 aa).

Asp-317 serves as the catalytic Nucleophile. The active-site Proton donor is Glu-370.

Belongs to the glycosyl hydrolase 13 family. GlgB subfamily. In terms of assembly, monomer.

The catalysed reaction is Transfers a segment of a (1-&gt;4)-alpha-D-glucan chain to a primary hydroxy group in a similar glucan chain.. It participates in glycan biosynthesis; glycogen biosynthesis. Functionally, catalyzes the formation of the alpha-1,6-glucosidic linkages in glycogen by scission of a 1,4-alpha-linked oligosaccharide from growing alpha-1,4-glucan chains and the subsequent attachment of the oligosaccharide to the alpha-1,6 position. The chain is 1,4-alpha-glucan branching enzyme GlgB from Nitratidesulfovibrio vulgaris (strain DP4) (Desulfovibrio vulgaris).